Here is a 270-residue protein sequence, read N- to C-terminus: Sorting nexin-11 (270 aa).

The 117-residue stretch at 16–132 (VITVRVQDPR…HLFLQSQLSV (117 aa)) folds into the PX domain. Arg-59, Lys-85, and Arg-99 together coordinate a 1,2-diacyl-sn-glycero-3-phospho-(1D-myo-inositol-3-phosphate). Positions 135–139 (IEACV) are important for membrane trafficking. The span at 168 to 177 (GSSHLAEGDQ) shows a compositional bias: basic and acidic residues. 2 disordered regions span residues 168–244 (GSSH…LSAS) and 251–270 (LGGG…VLEK). The span at 218 to 227 (LESPTLPPTS) shows a compositional bias: pro residues.

The protein belongs to the sorting nexin family. Monomer. Interacts with TRPV3; this interaction promotes TRPV3 trafficking from the cell membrane to lysosome for degradation.

The protein resides in the cell membrane. It is found in the endosome. Its subcellular location is the cytoplasm. Phosphoinositide-binding protein involved in protein sorting and membrane trafficking in endosomes. Regulates the levels of TRPV3 by promoting its trafficking from the cell membrane to lysosome for degradation. This Bos taurus (Bovine) protein is Sorting nexin-11 (SNX11).